Here is a 158-residue protein sequence, read N- to C-terminus: 2-C-methyl-D-erythritol 2,4-cyclodiphosphate synthase (158 aa).

Positions 9 and 11 each coordinate a divalent metal cation. Residues Asp9–His11 and His35–Ser36 each bind 4-CDP-2-C-methyl-D-erythritol 2-phosphate. His43 is an a divalent metal cation binding site. 4-CDP-2-C-methyl-D-erythritol 2-phosphate-binding positions include Asp57–Gly59, Phe62–Asp66, Thr133–Glu136, Phe140, and Arg143.

Belongs to the IspF family. As to quaternary structure, homotrimer. A divalent metal cation serves as cofactor.

It catalyses the reaction 4-CDP-2-C-methyl-D-erythritol 2-phosphate = 2-C-methyl-D-erythritol 2,4-cyclic diphosphate + CMP. It participates in isoprenoid biosynthesis; isopentenyl diphosphate biosynthesis via DXP pathway; isopentenyl diphosphate from 1-deoxy-D-xylulose 5-phosphate: step 4/6. In terms of biological role, involved in the biosynthesis of isopentenyl diphosphate (IPP) and dimethylallyl diphosphate (DMAPP), two major building blocks of isoprenoid compounds. Catalyzes the conversion of 4-diphosphocytidyl-2-C-methyl-D-erythritol 2-phosphate (CDP-ME2P) to 2-C-methyl-D-erythritol 2,4-cyclodiphosphate (ME-CPP) with a corresponding release of cytidine 5-monophosphate (CMP). The sequence is that of 2-C-methyl-D-erythritol 2,4-cyclodiphosphate synthase from Haemophilus influenzae (strain 86-028NP).